The following is a 92-amino-acid chain: Large ribosomal subunit protein uL23 (92 aa).

This sequence belongs to the universal ribosomal protein uL23 family. In terms of assembly, part of the 50S ribosomal subunit. Contacts protein L29, and trigger factor when it is bound to the ribosome.

One of the early assembly proteins it binds 23S rRNA. One of the proteins that surrounds the polypeptide exit tunnel on the outside of the ribosome. Forms the main docking site for trigger factor binding to the ribosome. In Bdellovibrio bacteriovorus (strain ATCC 15356 / DSM 50701 / NCIMB 9529 / HD100), this protein is Large ribosomal subunit protein uL23.